The sequence spans 158 residues: Transcription elongation factor GreA (158 aa).

The protein belongs to the GreA/GreB family.

Necessary for efficient RNA polymerase transcription elongation past template-encoded arresting sites. The arresting sites in DNA have the property of trapping a certain fraction of elongating RNA polymerases that pass through, resulting in locked ternary complexes. Cleavage of the nascent transcript by cleavage factors such as GreA or GreB allows the resumption of elongation from the new 3'terminus. GreA releases sequences of 2 to 3 nucleotides. The sequence is that of Transcription elongation factor GreA from Wigglesworthia glossinidia brevipalpis.